Reading from the N-terminus, the 544-residue chain is Protein kinase dsk1 (544 aa).

The Protein kinase domain maps to 81–516; the sequence is YVVERKLGWG…AGYMSNSPWL (436 aa). Residues 87–95 and Lys110 contribute to the ATP site; that span reads LGWGHFSTV. Asp214 serves as the catalytic Proton acceptor. Disordered regions lie at residues 235–299 and 316–341; these read PATT…SSPF and ISLR…SLIL. Over residues 237-254 the composition is skewed to low complexity; the sequence is TTSSPTSNTSSSKTRNNT. Composition is skewed to polar residues over residues 281–299 and 327–337; these read KNPT…SSPF and HPNSPFSSGDN.

It belongs to the protein kinase superfamily. Ser/Thr protein kinase family. Post-translationally, phosphorylated on Ser residue(s).

Its subcellular location is the cytoplasm. It is found in the nucleus. It catalyses the reaction L-seryl-[protein] + ATP = O-phospho-L-seryl-[protein] + ADP + H(+). The enzyme catalyses L-threonyl-[protein] + ATP = O-phospho-L-threonyl-[protein] + ADP + H(+). Functionally, may play an important role in mitotic control by altering cellular location, degree of phosphorylation and kinase activity. Abundant expression accelerates the exit when cells are in M-phase and also delays the entry into mitosis when cells are in G2. Phosphorylates prp2 in vitro and so may have a role in co-ordinating pre-mRNA splicing with the progression of the cell division cycle. In Schizosaccharomyces pombe (strain 972 / ATCC 24843) (Fission yeast), this protein is Protein kinase dsk1 (dsk1).